The primary structure comprises 564 residues: Urocanate hydratase (564 aa).

NAD(+)-binding positions include 54-55, Gln132, 178-180, Glu198, Arg203, 244-245, 269-273, 279-280, and Tyr328; these read GG, GMG, NA, QTSAH, and YL. Cys416 is an active-site residue. Gly498 contributes to the NAD(+) binding site.

This sequence belongs to the urocanase family. As to quaternary structure, homodimer. Requires NAD(+) as cofactor.

It carries out the reaction 4-imidazolone-5-propanoate = trans-urocanate + H2O. The protein operates within amino-acid degradation; L-histidine degradation into L-glutamate; N-formimidoyl-L-glutamate from L-histidine: step 2/3. The chain is Urocanate hydratase from Trifolium repens (Creeping white clover).